Here is a 535-residue protein sequence, read N- to C-terminus: Pyrichalasin C-18 hydroxylase (535 aa).

A helical transmembrane segment spans residues 42 to 62 (LPSGTLIVLAALSLALLVAVL). Residues asparagine 139 and asparagine 222 are each glycosylated (N-linked (GlcNAc...) asparagine). Cysteine 479 contributes to the heme binding site.

It belongs to the cytochrome P450 family. The cofactor is heme.

The protein localises to the membrane. The protein operates within mycotoxin biosynthesis. Its function is as follows. Cytochrome P450 monooxygenase; part of the gene cluster that mediates the biosynthesis of the mycotoxin pyrichalasin H, a tyrosine-derived cytochalasan that inhibits the growth of rice seedlings, but also inhibits lymphocyte capping and actin polymerization and alters cell morphology. Pyrichalasin H is indicated as the responsible agent for the genus-specific pathogenicity of M.grisea toward crabgrass. The first step in the pathway is catalyzed by the O-methyltransferase pyiA which methylates free tyrosine to generate the precursor O-methyltyrosine. The hybrid PKS-NRPS pyiS, assisted by the enoyl reductase pyiC, are responsible for fusion of the O-methyltyrosine precursor and the polyketide backbone. The polyketide synthase module (PKS) of pyiS is responsible for the synthesis of the polyketide backbone and the downstream nonribosomal peptide synthetase (NRPS) amidates the carboxyl end of the polyketide with the O-methyltyrosine precursor. As the NRPS A-domain demonstrates substrate tolerance, pyiS can also use phenylalanine, tyrosine and even para-chlorophenylalanine as amino acid precursor, which leads to the production of novel cytochalasans, including halogenated cytochalasans. Because pyiS lacks a designated enoylreductase (ER) domain, the required activity is provided the enoyl reductase pyiC. Reduction by the hydrolyase pyiE leads to 1,5-dihydropyrrolone, which is substrate for dehydration and intra-molecular Diels-Alder cyclization by the Diels-Alderase pyiF to yield the required isoindolone-fused macrocycle. The tailoring cytochrome P450 monooxygenases piyD and piyG catalyze the hydroxylation at C-18 and C-7, respectivily, whereas the short-chain dehydrogenase/reductase pyiH reduces the carbonyl at C-21 in preparation for the transfer of an acetyl group by the acetyltransferase pyiB. These 3 reactions whose order is not clear yet, lead to the production of O-methylpyrichalasin J, a deacetylated pyrichalasin H. Finally, pyiB to converts O-methylpyrichalasin J into the final product pyrichalasin H via acetylation of C-21. This Pyricularia grisea (Crabgrass-specific blast fungus) protein is Pyrichalasin C-18 hydroxylase.